Reading from the N-terminus, the 378-residue chain is Spermidine/putrescine import ATP-binding protein PotA (378 aa).

The 231-residue stretch at 18-248 (VQLAGIRKCF…PKNLFVTGFI (231 aa)) folds into the ABC transporter domain. Residue 50–57 (GPSGCGKT) coordinates ATP.

Belongs to the ABC transporter superfamily. Spermidine/putrescine importer (TC 3.A.1.11.1) family. In terms of assembly, the complex is composed of two ATP-binding proteins (PotA), two transmembrane proteins (PotB and PotC) and a solute-binding protein (PotD).

It is found in the cell inner membrane. It carries out the reaction ATP + H2O + polyamine-[polyamine-binding protein]Side 1 = ADP + phosphate + polyamineSide 2 + [polyamine-binding protein]Side 1.. Part of the ABC transporter complex PotABCD involved in spermidine/putrescine import. Responsible for energy coupling to the transport system. The sequence is that of Spermidine/putrescine import ATP-binding protein PotA from Shigella flexneri serotype 5b (strain 8401).